The primary structure comprises 270 residues: uncharacterized protein (270 aa).

2 stretches are compositionally biased toward basic and acidic residues: residues 1 to 13 and 49 to 73; these read MSEF…KDLY and EVER…KEEK. Disordered regions lie at residues 1–76, 90–111, and 204–270; these read MSEF…KQEE, STSP…PQTE, and KKRR…FRTE. Over residues 90-102 the composition is skewed to polar residues; that stretch reads STSPAQEEQGSST. A compositionally biased stretch (basic residues) spans 204–216; it reads KKRRPGQKQRAAK. Residues 218 to 235 are compositionally biased toward basic and acidic residues; the sequence is LALERTKERDTKAREIKK. Positions 236 to 253 are enriched in basic residues; that stretch reads QLKKKFHKRGGKKNKKKV.

This is an uncharacterized protein from Saccharomyces cerevisiae (strain ATCC 204508 / S288c) (Baker's yeast).